Consider the following 960-residue polypeptide: Valine--tRNA ligase (960 aa).

A 'HIGH' region motif is present at residues Pro-42–His-52. The 'KMSKS' region motif lies at Lys-553–Ser-557. Lys-556 is a binding site for ATP. Positions Val-879–Asp-950 form a coiled coil.

The protein belongs to the class-I aminoacyl-tRNA synthetase family. ValS type 1 subfamily. Monomer.

The protein resides in the cytoplasm. The catalysed reaction is tRNA(Val) + L-valine + ATP = L-valyl-tRNA(Val) + AMP + diphosphate. Catalyzes the attachment of valine to tRNA(Val). As ValRS can inadvertently accommodate and process structurally similar amino acids such as threonine, to avoid such errors, it has a 'posttransfer' editing activity that hydrolyzes mischarged Thr-tRNA(Val) in a tRNA-dependent manner. This chain is Valine--tRNA ligase, found in Buchnera aphidicola subsp. Schizaphis graminum (strain Sg).